The following is a 245-amino-acid chain: Chlorophyll a-b binding protein 1B-21, chloroplastic (245 aa).

The N-terminal 44 residues, M1–M44, are a transit peptide targeting the chloroplast. Residue W48 coordinates chlorophyll b. 3 residues coordinate chlorophyll a: F68, E87, and H90. R92 is a chlorophyll b binding site. Residues W93 to V113 form a helical membrane-spanning segment. Residue L129 coordinates chlorophyll a. The chain crosses the membrane as a helical span at residues P132 to A152. Chlorophyll b contacts are provided by V133, E153, and R156. Chlorophyll a is bound by residues K190, E191, N194, R196, Q208, and H224.

The protein belongs to the light-harvesting chlorophyll a/b-binding (LHC) protein family. In terms of assembly, the LHC complex consists of chlorophyll a-b binding proteins. It depends on Binds at least 14 chlorophylls (8 Chl-a and 6 Chl-b) and carotenoids such as lutein and neoxanthin. as a cofactor. Post-translationally, photoregulated by reversible phosphorylation of its threonine residues.

It localises to the plastid. The protein resides in the chloroplast thylakoid membrane. In terms of biological role, the light-harvesting complex (LHC) functions as a light receptor, it captures and delivers excitation energy to photosystems with which it is closely associated. This is Chlorophyll a-b binding protein 1B-21, chloroplastic (LHC Ib-21) from Hordeum vulgare (Barley).